Here is a 340-residue protein sequence, read N- to C-terminus: MQKKVLSLVLVLAVLESIVPVSAWGTITHVRMSSEAGNPYTGFKMEYLSGSIAPDAGYIISTEWGTKFHGYYVNDALNIANKMLSLAEGTDEKAFAKGWLAHLMQDRVAHGNGDGLPKDQAYGEGYSNYAAKKYGLTHIEAEFFVNGRVIHEKGWDWDFVRFAVPTELIVKTMRSLYGSAPNENDLNNAYNTFAMEYYGELAFWNSPSGNTAYLTLLLFGTVSDYDDYVSDVHCNPYEESIYLTNHPNARSTYAAGTYIMGVKKVKSSDGQIKKWMKEYAERLEKAGAIKVNRKFEDGWLVIEFRMVDKYKADRIAKEVLQDMARSEEIFQFINLKGDEK.

The first 23 residues, 1-23 (MQKKVLSLVLVLAVLESIVPVSA), serve as a signal peptide directing secretion.

This is an uncharacterized protein from Archaeoglobus fulgidus (strain ATCC 49558 / DSM 4304 / JCM 9628 / NBRC 100126 / VC-16).